Here is a 361-residue protein sequence, read N- to C-terminus: Phosphoserine aminotransferase (361 aa).

Ser9 and Arg42 together coordinate L-glutamate. Residues 76–77 (GR), Trp102, Thr153, Asp173, and Gln196 each bind pyridoxal 5'-phosphate. An N6-(pyridoxal phosphate)lysine modification is found at Lys197. 238–239 (NT) contributes to the pyridoxal 5'-phosphate binding site.

It belongs to the class-V pyridoxal-phosphate-dependent aminotransferase family. SerC subfamily. Homodimer. It depends on pyridoxal 5'-phosphate as a cofactor.

It localises to the cytoplasm. The catalysed reaction is O-phospho-L-serine + 2-oxoglutarate = 3-phosphooxypyruvate + L-glutamate. It catalyses the reaction 4-(phosphooxy)-L-threonine + 2-oxoglutarate = (R)-3-hydroxy-2-oxo-4-phosphooxybutanoate + L-glutamate. The protein operates within amino-acid biosynthesis; L-serine biosynthesis; L-serine from 3-phospho-D-glycerate: step 2/3. It participates in cofactor biosynthesis; pyridoxine 5'-phosphate biosynthesis; pyridoxine 5'-phosphate from D-erythrose 4-phosphate: step 3/5. Its function is as follows. Catalyzes the reversible conversion of 3-phosphohydroxypyruvate to phosphoserine and of 3-hydroxy-2-oxo-4-phosphonooxybutanoate to phosphohydroxythreonine. This is Phosphoserine aminotransferase from Cronobacter sakazakii (strain ATCC BAA-894) (Enterobacter sakazakii).